Reading from the N-terminus, the 275-residue chain is Photosystem II extrinsic protein O (275 aa).

The signal sequence occupies residues 1–28; sequence MRFRTLLIAFLALCLGLITACSEGPANA.

It belongs to the PsbO family. In terms of assembly, PSII is composed of 1 copy each of membrane proteins PsbA, PsbB, PsbC, PsbD, PsbE, PsbF, PsbH, PsbI, PsbJ, PsbK, PsbL, PsbM, PsbT, PsbX, PsbY, PsbZ, Psb30/Ycf12, peripheral proteins PsbO, CyanoQ (PsbQ), PsbU, PsbV and a large number of cofactors. It forms dimeric complexes.

The protein localises to the cellular thylakoid membrane. Its function is as follows. One of the extrinsic, lumenal subunits of photosystem II (PSII), which stabilize and protect the oxygen-evolving complex. PSII is a light-driven water plastoquinone oxidoreductase, using light energy to abstract electrons from H(2)O, generating a proton gradient subsequently used for ATP formation. Required for dimerization of PSII and for binding of PsbQ to PSII. The sequence is that of Photosystem II extrinsic protein O from Crocosphaera subtropica (strain ATCC 51142 / BH68) (Cyanothece sp. (strain ATCC 51142)).